Consider the following 228-residue polypeptide: MASSSLLLASVVVAAMVSAVSCGPPKVPPGPNITASYGDKWLEARATWYGAAKGAGRKDNSGACGYKDVDKAPFLGMNSCGNDPIFKDGKGCGSCFEIKCSKPKACSDKPVLIHVTDMNDEPIAAYHFDLFGLAFGAMAKDGKDEELLKYVAGDGDVVEVEIKEKGSEEWKALKESWGAIWRIDTPKPLKGPFSVRVTTEGGEKIIAEDAIPDGWKADSVYKSNVQAK.

The signal sequence occupies residues 1 to 22; it reads MASSSLLLASVVVAAMVSAVSC. N-linked (GlcNAc...) asparagine glycosylation is present at Asn-32. The 112-residue stretch at 61–172 folds into the Expansin-like EG45 domain; the sequence is SGACGYKDVD…KEKGSEEWKA (112 aa). 2 disulfide bridges follow: Cys-64/Cys-92 and Cys-100/Cys-106. The 82-residue stretch at 142-223 folds into the Expansin-like CBD domain; that stretch reads GKDEELLKYV…GWKADSVYKS (82 aa).

This sequence belongs to the expansin family. Expansin B subfamily.

The protein resides in the secreted. The protein localises to the cell wall. It is found in the membrane. Its function is as follows. May cause loosening and extension of plant cell walls by disrupting non-covalent bonding between cellulose microfibrils and matrix glucans. No enzymatic activity has been found. May be required for rapid internodal elongation in deepwater rice during submergence. This is Expansin-B13 (EXPB13) from Oryza sativa subsp. japonica (Rice).